Reading from the N-terminus, the 775-residue chain is ADP-ribosylation factor GTPase-activating protein AGD4 (775 aa).

The BAR domain maps to 2–226 (ATFINLEDSP…IHQILTYAQQ (225 aa)). One can recognise a PH domain in the interval 288–421 (EVIKQGYLLK…WVNKITKAIG (134 aa)). An Arf-GAP domain is found at 467–603 (DDVSTILRGL…ALVIKDESEA (137 aa)). The C4-type zinc-finger motif lies at 482–505 (CAECNAPEPDWASLNLGVLLCIQC). ANK repeat units follow at residues 682–711 (QGCS…DLNI) and 715–744 (HGRT…RPSI).

In terms of tissue distribution, expressed in roots, hypocotyls, cotyledons, leaf and shoot apical meristems and siliques.

In terms of biological role, probable GTPase-activating protein. The sequence is that of ADP-ribosylation factor GTPase-activating protein AGD4 (AGD4) from Arabidopsis thaliana (Mouse-ear cress).